A 741-amino-acid chain; its full sequence is Phosphoribosylformylglycinamidine synthase subunit PurL (741 aa).

His-53 is an active-site residue. Residues Tyr-56 and Lys-95 each contribute to the ATP site. Glu-97 contacts Mg(2+). Residues 98-101 (SHNH) and Arg-120 each bind substrate. The Proton acceptor role is filled by His-99. Asp-121 contributes to the Mg(2+) binding site. Position 244 (Gln-244) interacts with substrate. Asp-274 serves as a coordination point for Mg(2+). Residue 318–320 (ESQ) participates in substrate binding. Positions 501 and 538 each coordinate ATP. Asn-539 serves as a coordination point for Mg(2+). Residue Ser-541 coordinates substrate.

The protein belongs to the FGAMS family. As to quaternary structure, monomer. Part of the FGAM synthase complex composed of 1 PurL, 1 PurQ and 2 PurS subunits.

It is found in the cytoplasm. The enzyme catalyses N(2)-formyl-N(1)-(5-phospho-beta-D-ribosyl)glycinamide + L-glutamine + ATP + H2O = 2-formamido-N(1)-(5-O-phospho-beta-D-ribosyl)acetamidine + L-glutamate + ADP + phosphate + H(+). It participates in purine metabolism; IMP biosynthesis via de novo pathway; 5-amino-1-(5-phospho-D-ribosyl)imidazole from N(2)-formyl-N(1)-(5-phospho-D-ribosyl)glycinamide: step 1/2. In terms of biological role, part of the phosphoribosylformylglycinamidine synthase complex involved in the purines biosynthetic pathway. Catalyzes the ATP-dependent conversion of formylglycinamide ribonucleotide (FGAR) and glutamine to yield formylglycinamidine ribonucleotide (FGAM) and glutamate. The FGAM synthase complex is composed of three subunits. PurQ produces an ammonia molecule by converting glutamine to glutamate. PurL transfers the ammonia molecule to FGAR to form FGAM in an ATP-dependent manner. PurS interacts with PurQ and PurL and is thought to assist in the transfer of the ammonia molecule from PurQ to PurL. The polypeptide is Phosphoribosylformylglycinamidine synthase subunit PurL (Limosilactobacillus fermentum (strain NBRC 3956 / LMG 18251) (Lactobacillus fermentum)).